Reading from the N-terminus, the 430-residue chain is Meiotically up-regulated gene 132 protein (430 aa).

The protein belongs to the UPF0300 family.

The protein resides in the mitochondrion. Functionally, has a role in meiosis. The chain is Meiotically up-regulated gene 132 protein (mug132) from Schizosaccharomyces pombe (strain 972 / ATCC 24843) (Fission yeast).